Consider the following 198-residue polypeptide: Holliday junction branch migration complex subunit RuvA (198 aa).

A domain I region spans residues 1-64 (MYEYIKGEYM…EDFIGLYGFE (64 aa)). Residues 65–143 (SLEELDMFKL…SDELLNCIDE (79 aa)) form a domain II region. The interval 144 to 154 (FDDVTQDNSLA) is flexible linker. The segment at 154–198 (ALSEALSALISLGYTEKEAEKVLKDVDKSESVENIIKSALVKLMG) is domain III.

It belongs to the RuvA family. Homotetramer. Forms an RuvA(8)-RuvB(12)-Holliday junction (HJ) complex. HJ DNA is sandwiched between 2 RuvA tetramers; dsDNA enters through RuvA and exits via RuvB. An RuvB hexamer assembles on each DNA strand where it exits the tetramer. Each RuvB hexamer is contacted by two RuvA subunits (via domain III) on 2 adjacent RuvB subunits; this complex drives branch migration. In the full resolvosome a probable DNA-RuvA(4)-RuvB(12)-RuvC(2) complex forms which resolves the HJ.

The protein resides in the cytoplasm. Its function is as follows. The RuvA-RuvB-RuvC complex processes Holliday junction (HJ) DNA during genetic recombination and DNA repair, while the RuvA-RuvB complex plays an important role in the rescue of blocked DNA replication forks via replication fork reversal (RFR). RuvA specifically binds to HJ cruciform DNA, conferring on it an open structure. The RuvB hexamer acts as an ATP-dependent pump, pulling dsDNA into and through the RuvAB complex. HJ branch migration allows RuvC to scan DNA until it finds its consensus sequence, where it cleaves and resolves the cruciform DNA. This is Holliday junction branch migration complex subunit RuvA from Clostridium botulinum (strain Alaska E43 / Type E3).